The chain runs to 678 residues: NADPH--cytochrome P450 reductase (678 aa).

Over 1–21 the chain is Lumenal; it reads MADSNMDAGTTTSEMVAEEVS. A helical membrane pass occupies residues 22 to 42; sequence LFSTTDVILFSLIVGVMTYWF. At 43 to 678 the chain is on the cytoplasmic side; that stretch reads LFRKKKEEVP…KGRYSLDVWS (636 aa). Serine 63 is modified (phosphoserine). Residues 80-224 enclose the Flavodoxin-like domain; sequence IIVFYGSQTG…DFITWREQFW (145 aa). Residues 86-91, 138-141, 173-182, and aspartate 208 contribute to the FMN site; these read SQTGTA, ATYG, and LGNKTYEHFN. The FAD-binding FR-type domain maps to 279–521; the sequence is KNPFLAVVTT…YVRKSQFRLP (243 aa). Arginine 298 provides a ligand contact to NADP(+). FAD-binding positions include arginine 424, 454-457, 472-474, tyrosine 478, and 488-491; these read RYYS, CAV, and GVAT. NADP(+) is bound by residues threonine 535, 596-597, 602-606, and aspartate 639; these read SR and KVYVQ. Tryptophan 677 contacts FAD.

Belongs to the NADPH--cytochrome P450 reductase family. The protein in the N-terminal section; belongs to the flavodoxin family. It in the C-terminal section; belongs to the flavoprotein pyridine nucleotide cytochrome reductase family. Requires FAD as cofactor. The cofactor is FMN.

Its subcellular location is the endoplasmic reticulum membrane. The catalysed reaction is 2 oxidized [cytochrome P450] + NADPH = 2 reduced [cytochrome P450] + NADP(+) + H(+). This enzyme is required for electron transfer from NADP to cytochrome P450 in microsomes. It can also provide electron transfer to heme oxygenase and cytochrome B5. The protein is NADPH--cytochrome P450 reductase of Bos taurus (Bovine).